Reading from the N-terminus, the 923-residue chain is Inorganic phosphate transporter PHO87 (923 aa).

The SPX domain occupies 1–334 (MRFSHFLKYN…HMNTRQELIE (334 aa)). Residues 1-461 (MRFSHFLKYN…KLFFGKRAMK (461 aa)) lie on the Extracellular side of the membrane. Disordered regions lie at residues 40-74 (ETPT…SSSK) and 86-107 (FGSK…IDGN). Residues 95–104 (KRGDSDEKAI) are compositionally biased toward basic and acidic residues. A Glycyl lysine isopeptide (Lys-Gly) (interchain with G-Cter in ubiquitin) cross-link involves residue lysine 102. Residues asparagine 162, asparagine 202, and asparagine 274 are each glycosylated (N-linked (GlcNAc...) asparagine). A helical membrane pass occupies residues 462–482 (IGFIIIVTGVLLGVKTFNDPV). Over 483-493 (EHRCMALVECC) the chain is Cytoplasmic. Residues 494–514 (AFLWASEAIPLHITGLLVPLL) traverse the membrane as a helical segment. The Extracellular portion of the chain corresponds to 515-537 (TVLFRVLKDDDGKVMGAAAASTE). The chain crosses the membrane as a helical span at residues 538-558 (ILGTMWSSTIMILLAGFTLGE). Residues 559 to 583 (ALSQYNVAKVLASWLLALAGTKPRN) lie on the Cytoplasmic side of the membrane. The chain crosses the membrane as a helical span at residues 584–604 (VLLMAMSVVFFLSMWISNVAS). At 605–627 (PVLTYSLLTPLLDPLDYTSPFAK) the chain is on the extracellular side. A helical membrane pass occupies residues 628–648 (ALVMGVALSADIGGMASPISS). Over 649–667 (PQNIISMQYLKPYGIGWGQ) the chain is Cytoplasmic. The chain crosses the membrane as a helical span at residues 668 to 688 (FFAVALPTGILSMLCSWALMI). At 689–707 (LTFKIGKTKLEKFKPIRTR) the chain is on the extracellular side. A helical transmembrane segment spans residues 708 to 728 (FTIKQYFIIIVTIATILLWCV). The Cytoplasmic portion of the chain corresponds to 729 to 735 (ESQIESA). The chain crosses the membrane as a helical span at residues 736-756 (FGSSGEIAVIPIVLFFGTGLL). Over 757 to 767 (STKDFNTFPWS) the chain is Extracellular. The chain crosses the membrane as a helical span at residues 768 to 788 (IVVLAMGGIALGKAVSSSGLL). At 789–802 (VTIARALQKKIQND) the chain is on the cytoplasmic side. The helical transmembrane segment at 803–823 (GVFAILCIFGILMLVVGTFVS) threads the bilayer. Residues 824–849 (HTVSAIIIIPLVQEVGDKLSDPKAAP) lie on the Extracellular side of the membrane. A helical membrane pass occupies residues 850 to 870 (ILVFGCALLASCGMGLASSGF). Residues 871 to 898 (PNVTAISMTDKKGNRWLTVGAFISRGVP) lie on the Cytoplasmic side of the membrane. A helical membrane pass occupies residues 899 to 919 (ASLLAFVCVITLGYGISSSVL). Over 920-923 (KGST) the chain is Extracellular.

Belongs to the CitM (TC 2.A.11) transporter family.

The protein localises to the membrane. Its function is as follows. Involved in the uptake of inorganic phosphate. The protein is Inorganic phosphate transporter PHO87 (PHO87) of Saccharomyces cerevisiae (strain ATCC 204508 / S288c) (Baker's yeast).